The primary structure comprises 205 residues: Molybdenum cofactor guanylyltransferase (205 aa).

Residues 14–16 (LAG), Lys-27, Asp-77, and Asp-107 each bind GTP. Residue Asp-107 coordinates Mg(2+).

Belongs to the MobA family. Monomer. Mg(2+) serves as cofactor.

Its subcellular location is the cytoplasm. The catalysed reaction is Mo-molybdopterin + GTP + H(+) = Mo-molybdopterin guanine dinucleotide + diphosphate. Transfers a GMP moiety from GTP to Mo-molybdopterin (Mo-MPT) cofactor (Moco or molybdenum cofactor) to form Mo-molybdopterin guanine dinucleotide (Mo-MGD) cofactor. The sequence is that of Molybdenum cofactor guanylyltransferase from Burkholderia ambifaria (strain MC40-6).